The following is a 371-amino-acid chain: Chorismate synthase (371 aa).

NADP(+) contacts are provided by Arg-48 and Arg-54. Residues 125–127, 238–239, Gly-278, 293–297, and Arg-319 contribute to the FMN site; these read RSS, NA, and KPTSS.

It belongs to the chorismate synthase family. In terms of assembly, homotetramer. The cofactor is FMNH2.

The catalysed reaction is 5-O-(1-carboxyvinyl)-3-phosphoshikimate = chorismate + phosphate. It participates in metabolic intermediate biosynthesis; chorismate biosynthesis; chorismate from D-erythrose 4-phosphate and phosphoenolpyruvate: step 7/7. Functionally, catalyzes the anti-1,4-elimination of the C-3 phosphate and the C-6 proR hydrogen from 5-enolpyruvylshikimate-3-phosphate (EPSP) to yield chorismate, which is the branch point compound that serves as the starting substrate for the three terminal pathways of aromatic amino acid biosynthesis. This reaction introduces a second double bond into the aromatic ring system. The protein is Chorismate synthase of Polynucleobacter asymbioticus (strain DSM 18221 / CIP 109841 / QLW-P1DMWA-1) (Polynucleobacter necessarius subsp. asymbioticus).